We begin with the raw amino-acid sequence, 127 residues long: UPF0166 protein PH1503 (127 aa).

It belongs to the UPF0166 family.

In Pyrococcus horikoshii (strain ATCC 700860 / DSM 12428 / JCM 9974 / NBRC 100139 / OT-3), this protein is UPF0166 protein PH1503.